A 155-amino-acid polypeptide reads, in one-letter code: Small ribosomal subunit protein uS7cz/uS7cy (155 aa).

Belongs to the universal ribosomal protein uS7 family. As to quaternary structure, part of the 30S ribosomal subunit.

The protein localises to the plastid. Its subcellular location is the chloroplast. Functionally, one of the primary rRNA binding proteins, it binds directly to 16S rRNA where it nucleates assembly of the head domain of the 30S subunit. The protein is Small ribosomal subunit protein uS7cz/uS7cy (rps7-A) of Calycanthus floridus var. glaucus (Eastern sweetshrub).